The chain runs to 161 residues: Calcium-binding protein CML24 (161 aa).

EF-hand domains are found at residues 13–48 (GSMDDIKKVFQRFDKNGDGKISVDELKEVIRALSPT), 49–84 (ASPEETVTMMKQFDLDGNGFIDLDEFVALFQIGIGG), 90–125 (NDVSDLKEAFELYDLDGNGRISAKELHSVMKNLGEK), and 126–161 (CSVQDCKKMISKVDIDGDGCVNFDEFKKMMSNGGGA). Ca(2+)-binding residues include D26, N28, D30, K32, E37, D62, D64, N66, E73, D103, D105, N107, R109, E114, D139, D141, D143, C145, and E150.

In terms of tissue distribution, expressed in seed coat, seedling radical, cotyledons, hypocotyl, shoot apex and elongating root. Expressed in the vasculature of cotyledons, leaves and roots. Highly expressed in guard cells, trichomes and hydathodes. Expressed in inflorescence stem branch points, silique abscission zone, young and mature styles and stigmatic papillae, mature anthers and developing seed.

Its function is as follows. Calcium-binding protein that may positively regulate abscisic acid (ABA) inhibition of germination and seedling development. May be required for photoperiod-induced flowering and function in ion homeostasis. This is Calcium-binding protein CML24 (CML24) from Arabidopsis thaliana (Mouse-ear cress).